A 351-amino-acid chain; its full sequence is Photosystem II D2 protein (351 aa).

Residues 39-59 (TAYLSIGGWLTGTTFVTSWYT) form a helical membrane-spanning segment. His116 serves as a coordination point for chlorophyll a. The chain crosses the membrane as a helical span at residues 123-139 (GFMLRQFEIARLVGIRP). 2 residues coordinate pheophytin a: Gln128 and Asn141. Residues 151–164 (VFVSVFLMYPLGQS) form a helical membrane-spanning segment. His196 is a binding site for chlorophyll a. Residues 206-226 (GALLCAIHGATVENTLFEDGE) form a helical membrane-spanning segment. Residues His213 and Phe260 each contribute to the a plastoquinone site. Residue His213 participates in Fe cation binding. His267 is a Fe cation binding site. The helical transmembrane segment at 277 to 293 (GLWTSAIGIIGLALNLR) threads the bilayer.

It belongs to the reaction center PufL/M/PsbA/D family. In terms of assembly, PSII is composed of 1 copy each of membrane proteins PsbA, PsbB, PsbC, PsbD, PsbE, PsbF, PsbH, PsbI, PsbJ, PsbK, PsbL, PsbM, PsbT, PsbX, PsbY, PsbZ, Psb30/Ycf12, peripheral proteins PsbO, CyanoQ (PsbQ), PsbU, PsbV and a large number of cofactors. It forms dimeric complexes. The cofactor is The D1/D2 heterodimer binds P680, chlorophylls that are the primary electron donor of PSII, and subsequent electron acceptors. It shares a non-heme iron and each subunit binds pheophytin, quinone, additional chlorophylls, carotenoids and lipids. There is also a Cl(-1) ion associated with D1 and D2, which is required for oxygen evolution. The PSII complex binds additional chlorophylls, carotenoids and specific lipids..

The protein localises to the cellular thylakoid membrane. It catalyses the reaction 2 a plastoquinone + 4 hnu + 2 H2O = 2 a plastoquinol + O2. In terms of biological role, photosystem II (PSII) is a light-driven water:plastoquinone oxidoreductase that uses light energy to abstract electrons from H(2)O, generating O(2) and a proton gradient subsequently used for ATP formation. It consists of a core antenna complex that captures photons, and an electron transfer chain that converts photonic excitation into a charge separation. The D1/D2 (PsbA/PsbD) reaction center heterodimer binds P680, the primary electron donor of PSII as well as several subsequent electron acceptors. D2 is needed for assembly of a stable PSII complex. This is Photosystem II D2 protein from Synechococcus sp. (strain CC9311).